The primary structure comprises 274 residues: Non-heme haloperoxidase (274 aa).

The AB hydrolase-1 domain maps to 22–254 (PIMFHHGWPL…RLKVYPGLSH (233 aa)). Catalysis depends on residues Ser-95, Asp-225, and His-254.

Belongs to the AB hydrolase superfamily. Bacterial non-heme haloperoxidase / perhydrolase family.

This chain is Non-heme haloperoxidase (thcF), found in Rhodococcus erythropolis (Arthrobacter picolinophilus).